Here is a 446-residue protein sequence, read N- to C-terminus: Tol-Pal system protein TolB (446 aa).

Positions 1–43 (MRKLWAPNWLSRRQNANPTRDQSRHALMAWLAAALMSAGAAHA) are cleaved as a signal peptide.

It belongs to the TolB family. In terms of assembly, the Tol-Pal system is composed of five core proteins: the inner membrane proteins TolA, TolQ and TolR, the periplasmic protein TolB and the outer membrane protein Pal. They form a network linking the inner and outer membranes and the peptidoglycan layer.

It localises to the periplasm. Its function is as follows. Part of the Tol-Pal system, which plays a role in outer membrane invagination during cell division and is important for maintaining outer membrane integrity. This Cupriavidus metallidurans (strain ATCC 43123 / DSM 2839 / NBRC 102507 / CH34) (Ralstonia metallidurans) protein is Tol-Pal system protein TolB.